The chain runs to 258 residues: Flagellar brake protein YcgR (258 aa).

Residues 131–248 enclose the PilZ domain; it reads QKREYYRVAT…ALSLIQRYIT (118 aa).

Belongs to the YcgR family. Monomer. Interacts with the flagellar basal bodies.

It is found in the bacterial flagellum basal body. Its function is as follows. Acts as a flagellar brake, regulating swimming and swarming in a bis-(3'-5') cyclic diguanylic acid (c-di-GMP)-dependent manner. Binds 1 c-di-GMP dimer per subunit. Increasing levels of c-di-GMP lead to decreased motility. The chain is Flagellar brake protein YcgR from Nitrosospira multiformis (strain ATCC 25196 / NCIMB 11849 / C 71).